The chain runs to 313 residues: Phosphoenolpyruvate phosphomutase (313 aa).

The segment at 1–23 (MNATERPGSDGTGSPESVGSRLK) is disordered. Catalysis depends on Asp-69, which acts as the Nucleophile.

This sequence belongs to the isocitrate lyase/PEP mutase superfamily. PEP mutase family.

The enzyme catalyses phosphoenolpyruvate + H(+) = 3-phosphonopyruvate. It participates in secondary metabolite biosynthesis; bialaphos biosynthesis. Formation of a carbon-phosphorus bond by converting phosphoenolpyruvate (PEP) to phosphonopyruvate (P-Pyr). The chain is Phosphoenolpyruvate phosphomutase (ppm) from Streptomyces viridochromogenes (strain DSM 40736 / JCM 4977 / BCRC 1201 / Tue 494).